The primary structure comprises 407 residues: Methyltransferase/ribosomally synthesized type I borosin cyclic peptide precursor ceuMA2 (407 aa).

Positions Met-1 to Arg-246 are methyltransferase domain. Catalysis depends on residues Arg-70, Tyr-74, and Tyr-96. The S-adenosyl-L-methionine site is built by Tyr-96, His-98, Val-101, Ala-128, Gln-170, Gly-208, Ser-239, and Thr-240. The segment at Glu-247–Thr-370 is clasp domain. The interval Pro-371–Ser-393 is precursor leader. An N-methylthreonine mark is found at Thr-399 and Thr-400. Residue Ile-401 is modified to N-methylisoleucine. Val-402 and Val-403 each carry N-methylvaline. The residue at position 404 (Ile-404) is an N-methylisoleucine. At Val-405 the chain carries N-methylvaline. N-methylhistidine is present on His-406.

It in the N-terminal section; belongs to the precorrin methyltransferase family. As to quaternary structure, homodimer. CeuMA2 automethylates at Thr-399, Thr-400, Ile-401, Val-402, Val-403, Ile-404, Val-405 and His-406 before being processed by a prolyloligopeptidase which likely forms a peptidyl ester upon removal of the follower propeptide, which then undergoes macrocyclization with the N-terminus of the modified core peptide. Peptide backbone alpha-N-methylations change the physicochemical properties of amide bonds to provide structural constraints and other favorable characteristics including biological membrane permeability to peptides.

The protein operates within secondary metabolite biosynthesis. Functionally, fusion protein of the methyltransferase ceuM2 and a type I borosin core peptide; part of the gene cluster that mediates the biosynthesis of a type I borosin, a highly methylated cyclic peptide with potent biological activities. Type I borosins derive from the C-terminus of the fusion protein, and it is the same protein that methylates its own C-terminus using S-adenosyl methionine (SAM). The C-terminus is subsequently cleaved off and macrocyclized by a prolyloligopeptidase to give the final product. This chain is Methyltransferase/ribosomally synthesized type I borosin cyclic peptide precursor ceuMA2, found in Cerrena unicolor (Canker rot fungus).